The chain runs to 628 residues: tRNA uridine 5-carboxymethylaminomethyl modification enzyme MnmG (628 aa).

FAD contacts are provided by residues 14-19 (GAGHAG), Val126, and Ser181. NAD(+) is bound at residue 273–287 (GPRYCPSIEDKVVRF). Position 370 (Gln370) interacts with FAD.

Belongs to the MnmG family. Homodimer. Heterotetramer of two MnmE and two MnmG subunits. FAD is required as a cofactor.

The protein resides in the cytoplasm. Functionally, NAD-binding protein involved in the addition of a carboxymethylaminomethyl (cmnm) group at the wobble position (U34) of certain tRNAs, forming tRNA-cmnm(5)s(2)U34. This Bacillus licheniformis (strain ATCC 14580 / DSM 13 / JCM 2505 / CCUG 7422 / NBRC 12200 / NCIMB 9375 / NCTC 10341 / NRRL NRS-1264 / Gibson 46) protein is tRNA uridine 5-carboxymethylaminomethyl modification enzyme MnmG.